A 274-amino-acid polypeptide reads, in one-letter code: NADPH-dependent 7-cyano-7-deazaguanine reductase (274 aa).

80–82 (VES) provides a ligand contact to substrate. 82–83 (SK) provides a ligand contact to NADPH. The Thioimide intermediate role is filled by cysteine 181. The Proton donor role is filled by aspartate 188. 220–221 (HE) lines the substrate pocket. 249–250 (RG) is a binding site for NADPH.

The protein belongs to the GTP cyclohydrolase I family. QueF type 2 subfamily. As to quaternary structure, homodimer.

It localises to the cytoplasm. The catalysed reaction is 7-aminomethyl-7-carbaguanine + 2 NADP(+) = 7-cyano-7-deazaguanine + 2 NADPH + 3 H(+). Its pathway is tRNA modification; tRNA-queuosine biosynthesis. Catalyzes the NADPH-dependent reduction of 7-cyano-7-deazaguanine (preQ0) to 7-aminomethyl-7-deazaguanine (preQ1). The sequence is that of NADPH-dependent 7-cyano-7-deazaguanine reductase from Burkholderia pseudomallei (strain 1106a).